Here is a 470-residue protein sequence, read N- to C-terminus: Putative bifunctional phosphatase/peptidyl-prolyl cis-trans isomerase (470 aa).

Aspartate 22 acts as the Nucleophile in catalysis. Residues aspartate 22, aspartate 24, and aspartate 221 each coordinate Mg(2+). The PPIase cyclophilin-type domain maps to 286–468 (TGPKVTIKTN…EDVIIETIEV (183 aa)).

In the C-terminal section; belongs to the cyclophilin-type PPIase family. PPIL1 subfamily. It depends on Mg(2+) as a cofactor.

The catalysed reaction is [protein]-peptidylproline (omega=180) = [protein]-peptidylproline (omega=0). Its function is as follows. PPIases accelerate the folding of proteins. It catalyzes the cis-trans isomerization of proline imidic peptide bonds in oligopeptides. The chain is Putative bifunctional phosphatase/peptidyl-prolyl cis-trans isomerase from Streptococcus pyogenes serotype M6 (strain ATCC BAA-946 / MGAS10394).